The primary structure comprises 393 residues: Methylthioribose-1-phosphate isomerase (393 aa).

Catalysis depends on Asp-265, which acts as the Proton donor.

The protein belongs to the eIF-2B alpha/beta/delta subunits family. MtnA subfamily.

It is found in the cytoplasm. The protein localises to the nucleus. It carries out the reaction 5-(methylsulfanyl)-alpha-D-ribose 1-phosphate = 5-(methylsulfanyl)-D-ribulose 1-phosphate. The protein operates within amino-acid biosynthesis; L-methionine biosynthesis via salvage pathway; L-methionine from S-methyl-5-thio-alpha-D-ribose 1-phosphate: step 1/6. Catalyzes the interconversion of methylthioribose-1-phosphate (MTR-1-P) into methylthioribulose-1-phosphate (MTRu-1-P). In Cryptococcus neoformans var. neoformans serotype D (strain JEC21 / ATCC MYA-565) (Filobasidiella neoformans), this protein is Methylthioribose-1-phosphate isomerase.